The chain runs to 125 residues: Small ribosomal subunit protein bS6 (125 aa).

The protein belongs to the bacterial ribosomal protein bS6 family.

Binds together with bS18 to 16S ribosomal RNA. The protein is Small ribosomal subunit protein bS6 (rpsF) of Campylobacter jejuni subsp. jejuni serotype O:2 (strain ATCC 700819 / NCTC 11168).